A 1381-amino-acid chain; its full sequence is Peroxisomal ATPase PEX6 (1381 aa).

The segment covering M1–S10 has biased composition (polar residues). Disordered stretches follow at residues M1 to P23, V247 to S315, T333 to R374, and Y467 to A499. A compositionally biased stretch (basic residues) spans S11–Q20. Acidic residues-rich tracts occupy residues A270 to D284 and T296 to S315. Polar residues-rich tracts occupy residues T333–P345, G355–T367, and F487–A499. G1031–T1038 provides a ligand contact to ATP. Composition is skewed to basic and acidic residues over residues G1294 to A1305 and S1337 to D1350. The tract at residues G1294 to D1381 is disordered. The segment covering G1372–D1381 has biased composition (acidic residues).

This sequence belongs to the AAA ATPase family. Interacts with PEX1; forming the PEX1-PEX6 AAA ATPase complex, which is composed of a heterohexamer formed by a trimer of PEX1-PEX6 dimers.

It localises to the cytoplasm. The protein localises to the cytosol. It is found in the peroxisome membrane. It catalyses the reaction ATP + H2O = ADP + phosphate + H(+). Component of the PEX1-PEX6 AAA ATPase complex, a protein dislocase complex that mediates the ATP-dependent extraction of the PEX5 receptor from peroxisomal membranes, an essential step for PEX5 recycling. Specifically recognizes PEX5 monoubiquitinated at 'Cys-6', and pulls it out of the peroxisome lumen through the PEX2-PEX10-PEX12 retrotranslocation channel. Extraction by the PEX1-PEX6 AAA ATPase complex is accompanied by unfolding of the TPR repeats and release of bound cargo from PEX5. This is Peroxisomal ATPase PEX6 (pex-6) from Neurospora crassa (strain ATCC 24698 / 74-OR23-1A / CBS 708.71 / DSM 1257 / FGSC 987).